Here is a 433-residue protein sequence, read N- to C-terminus: Probable beta-1,3-galactosyl-O-glycosyl-glycoprotein beta-1,6-N-acetylglucosaminyltransferase 7 (433 aa).

Residues methionine 1–lysine 8 are Cytoplasmic-facing. Residues alanine 9 to leucine 25 form a helical; Signal-anchor for type II membrane protein membrane-spanning segment. Residues arginine 26–histidine 433 are Extracellular-facing. Cystine bridges form between cysteine 57/cysteine 209, cysteine 143/cysteine 358, cysteine 164/cysteine 191, and cysteine 367/cysteine 398. Asparagine 112 is a glycosylation site (N-linked (GlcNAc...) asparagine). Residues asparagine 233–histidine 275 are disordered. The span at aspartate 258–histidine 275 shows a compositional bias: polar residues. Residues valine 413–histidine 433 are disordered. Positions phenylalanine 421 to histidine 433 are enriched in polar residues.

It belongs to the glycosyltransferase 14 family.

It localises to the golgi apparatus membrane. It participates in protein modification; protein glycosylation. Functionally, probable glycosyltransferase. The polypeptide is Probable beta-1,3-galactosyl-O-glycosyl-glycoprotein beta-1,6-N-acetylglucosaminyltransferase 7 (Mus musculus (Mouse)).